We begin with the raw amino-acid sequence, 149 residues long: Calmodulin-2 (149 aa).

Alanine 2 carries the post-translational modification N-acetylalanine. EF-hand domains are found at residues 8 to 43, 44 to 79, 81 to 116, and 117 to 149; these read EQIA…LGQN, PTEA…KMKD, DSEE…LGEK, and LTDE…MLAK. Aspartate 21, aspartate 23, aspartate 25, cysteine 27, glutamate 32, aspartate 57, aspartate 59, asparagine 61, threonine 63, glutamate 68, aspartate 94, aspartate 96, asparagine 98, tyrosine 100, and aspartate 105 together coordinate Ca(2+). Lysine 116 is subject to N6,N6,N6-trimethyllysine. Aspartate 130, aspartate 132, aspartate 134, glutamine 136, and glutamate 141 together coordinate Ca(2+).

The protein belongs to the calmodulin family.

Calmodulin mediates the control of a large number of enzymes, ion channels and other proteins by Ca(2+). Among the enzymes to be stimulated by the calmodulin-Ca(2+) complex are a number of protein kinases and phosphatases. This is Calmodulin-2 (CAM72) from Petunia hybrida (Petunia).